Reading from the N-terminus, the 325-residue chain is Ribose-phosphate pyrophosphokinase 2 (325 aa).

Position 96–101 (96–101 (RQDKKD)) interacts with ATP. The Mg(2+) site is built by D135, H137, D146, and D150. H137 serves as a coordination point for ATP. The segment at 219-234 (KDRVAILVDDMADTCG) is binding of phosphoribosylpyrophosphate.

The protein belongs to the ribose-phosphate pyrophosphokinase family. In terms of assembly, homodimer. The active form is probably a hexamer composed of 3 homodimers. The cofactor is Mg(2+).

It carries out the reaction D-ribose 5-phosphate + ATP = 5-phospho-alpha-D-ribose 1-diphosphate + AMP + H(+). It participates in metabolic intermediate biosynthesis; 5-phospho-alpha-D-ribose 1-diphosphate biosynthesis; 5-phospho-alpha-D-ribose 1-diphosphate from D-ribose 5-phosphate (route I): step 1/1. Its activity is regulated as follows. Activated by magnesium and inorganic phosphate. Competitively or non-competitively inhibited by ADP, 2,3-bisphosphoglyceride or GDP. In terms of biological role, catalyzes the synthesis of phosphoribosylpyrophosphate (PRPP) that is essential for nucleotide synthesis. This Gallus gallus (Chicken) protein is Ribose-phosphate pyrophosphokinase 2 (PRPS2).